Here is a 137-residue protein sequence, read N- to C-terminus: Small ribosomal subunit protein uS12 (137 aa).

The residue at position 89 (D89) is a 3-methylthioaspartic acid. The segment at 105 to 137 (AGVAGRTQRRSKYGAKRPKAGQAAAPAKGKGKK) is disordered. Over residues 111-123 (TQRRSKYGAKRPK) the composition is skewed to basic residues. Positions 124-137 (AGQAAAPAKGKGKK) are enriched in low complexity.

This sequence belongs to the universal ribosomal protein uS12 family. As to quaternary structure, part of the 30S ribosomal subunit. Contacts proteins S8 and S17. May interact with IF1 in the 30S initiation complex.

Functionally, with S4 and S5 plays an important role in translational accuracy. Its function is as follows. Interacts with and stabilizes bases of the 16S rRNA that are involved in tRNA selection in the A site and with the mRNA backbone. Located at the interface of the 30S and 50S subunits, it traverses the body of the 30S subunit contacting proteins on the other side and probably holding the rRNA structure together. The combined cluster of proteins S8, S12 and S17 appears to hold together the shoulder and platform of the 30S subunit. The chain is Small ribosomal subunit protein uS12 from Phocaeicola vulgatus (strain ATCC 8482 / DSM 1447 / JCM 5826 / CCUG 4940 / NBRC 14291 / NCTC 11154) (Bacteroides vulgatus).